Here is a 103-residue protein sequence, read N- to C-terminus: Small ribosomal subunit protein uS10 (103 aa).

Belongs to the universal ribosomal protein uS10 family. In terms of assembly, part of the 30S ribosomal subunit.

Functionally, involved in the binding of tRNA to the ribosomes. The polypeptide is Small ribosomal subunit protein uS10 (Neisseria meningitidis serogroup C / serotype 2a (strain ATCC 700532 / DSM 15464 / FAM18)).